A 140-amino-acid polypeptide reads, in one-letter code: Histone H3-like protein (140 aa).

Positions 1–36 (MSRTKQTASKALGGKAPRKGISAKSIPSSGCSPAMP) are disordered. N6,N6,N6-trimethyllysine; alternate is present on Lys-5. Position 5 is an N6,N6-dimethyllysine; alternate (Lys-5). Residues Lys-5 and Lys-10 each carry the N6-methyllysine; alternate modification. Lys-10, Lys-15, Lys-19, and Lys-24 each carry N6-acetyllysine; alternate. At Lys-15 the chain carries N6,N6-dimethyllysine; alternate. Lys-19 and Lys-24 each carry N6-methyllysine; alternate. Lys-56 and Lys-64 each carry N6-acetyllysine.

Belongs to the histone H3 family. In terms of assembly, the nucleosome is a histone octamer containing two molecules each of H2A, H2B, H3 and H4 assembled in one H3-H4 heterotetramer and two H2A-H2B heterodimers. The octamer wraps approximately 147 bp of DNA. Mono-, di- and trimethylated to form H3K4me1/2/3. H3K4me activates gene expression by regulating transcription elongation and plays a role in telomere length maintenance. H3K4me enrichment correlates with transcription levels, and occurs in a 5' to 3' gradient with H3K4me3 enrichment at the 5'-end of genes, shifting to H3K4me2 and then H3K4me1. In terms of processing, acetylation of histone H3 leads to transcriptional activation.

It is found in the nucleus. The protein localises to the chromosome. Its function is as follows. Core component of nucleosome. Nucleosomes wrap and compact DNA into chromatin, limiting DNA accessibility to the cellular machineries which require DNA as a template. Histones thereby play a central role in transcription regulation, DNA repair, DNA replication and chromosomal stability. DNA accessibility is regulated via a complex set of post-translational modifications of histones, also called histone code, and nucleosome remodeling. The protein is Histone H3-like protein of Encephalitozoon cuniculi (strain GB-M1) (Microsporidian parasite).